Consider the following 348-residue polypeptide: Photosystem II protein D1 (348 aa).

3 consecutive transmembrane segments (helical) span residues 33-50 (YIGWFGILMFPLISLATV), 122-137 (HFIFGAGAWMGREWEF), and 146-160 (WIFVAFSAPLVASCA). Histidine 122 contributes to the chlorophyll a binding site. Position 130 (tryptophan 130) interacts with pheophytin a. [CaMn4O5] cluster contacts are provided by aspartate 174 and glutamate 193. Residues 201 to 222 (FHILGVAGVFGGSLFSAMHGSL) traverse the membrane as a helical segment. Chlorophyll a is bound at residue histidine 202. A quinone contacts are provided by residues histidine 219 and 268 to 269 (SF). Histidine 219 lines the Fe cation pocket. Histidine 276 contacts Fe cation. Residues 278-292 (FLAAWPVIGIWFTAL) traverse the membrane as a helical segment. [CaMn4O5] cluster-binding residues include histidine 336, glutamate 337, aspartate 346, and alanine 348.

Belongs to the reaction center PufL/M/PsbA/D family. As to quaternary structure, PSII is composed of 1 copy each of membrane proteins PsbA, PsbB, PsbC, PsbD, PsbE, PsbF, PsbH, PsbI, PsbJ, PsbK, PsbL, PsbM, PsbT, PsbX, PsbY, PsbZ, Psb30/Ycf12, at least 3 peripheral proteins of the oxygen-evolving complex and a large number of cofactors. It forms dimeric complexes. It depends on The D1/D2 heterodimer binds P680, chlorophylls that are the primary electron donor of PSII, and subsequent electron acceptors. It shares a non-heme iron and each subunit binds pheophytin, quinone, additional chlorophylls, carotenoids and lipids. D1 provides most of the ligands for the Mn4-Ca-O5 cluster of the oxygen-evolving complex (OEC). There is also a Cl(-1) ion associated with D1 and D2, which is required for oxygen evolution. The PSII complex binds additional chlorophylls, carotenoids and specific lipids. as a cofactor. In terms of processing, tyr-165 forms a radical intermediate that is referred to as redox-active TyrZ, YZ or Y-Z.

It localises to the plastid. Its subcellular location is the chloroplast thylakoid membrane. It catalyses the reaction 2 a plastoquinone + 4 hnu + 2 H2O = 2 a plastoquinol + O2. Photosystem II (PSII) is a light-driven water:plastoquinone oxidoreductase that uses light energy to abstract electrons from H(2)O, generating O(2) and a proton gradient subsequently used for ATP formation. It consists of a core antenna complex that captures photons, and an electron transfer chain that converts photonic excitation into a charge separation. The D1/D2 (PsbA/PsbD) reaction center heterodimer binds P680, the primary electron donor of PSII as well as several subsequent electron acceptors. This Heterocapsa rotundata (Dinoflagellate) protein is Photosystem II protein D1.